The sequence spans 316 residues: Olfactory receptor 2G6 (316 aa).

Residues 1-25 lie on the Extracellular side of the membrane; sequence MEETNNSSEKGFLLLGFSDQPQLER. N-linked (GlcNAc...) asparagine glycosylation is found at Asn5 and Asn6. The helical transmembrane segment at 26–49 threads the bilayer; it reads FLFAIILYFYVLSLLGNTALILVC. Over 50 to 57 the chain is Cytoplasmic; it reads CLDSRLHT. A helical membrane pass occupies residues 58–79; sequence PMYFFLSNLSCVDICFTTSVAP. Residues 80–100 lie on the Extracellular side of the membrane; the sequence is QLLVTMNKKDKTMSYGGCVAQ. A disulfide bridge connects residues Cys97 and Cys189. The chain crosses the membrane as a helical span at residues 101-120; the sequence is LYVAMGLGSSECILLAVMAY. Over 121 to 139 the chain is Cytoplasmic; the sequence is DRYAAVCRPLRYIAIMHPR. The chain crosses the membrane as a helical span at residues 140–158; it reads FCASLAGGAWLSGLITSLI. The Extracellular portion of the chain corresponds to 159–195; sequence QCSLTVQLPLCGHRTLDHIFCEVPVLIKLACVDTTFN. The chain crosses the membrane as a helical span at residues 196–219; the sequence is EAELFVASVVFLIVPVLLILVSYG. Residues 220–236 are Cytoplasmic-facing; that stretch reads FITQAVLRIKSAAGRQK. The chain crosses the membrane as a helical span at residues 237 to 259; it reads AFGTCSSHLVVVIIFYGTIIFMY. Residues 260–272 are Extracellular-facing; the sequence is LQPANRRSKNQGK. Residues 273–292 form a helical membrane-spanning segment; it reads FVSLFYTIVTPLLNPIIYTL. Over 293-316 the chain is Cytoplasmic; the sequence is RNKDVKGALRTLILGSAAGQSHKD.

It belongs to the G-protein coupled receptor 1 family.

It is found in the cell membrane. Functionally, odorant receptor. The polypeptide is Olfactory receptor 2G6 (OR2G6) (Homo sapiens (Human)).